The primary structure comprises 210 residues: Glycerol-3-phosphate acyltransferase 2 (210 aa).

6 helical membrane passes run 4–24 (LIMV…PAPY), 54–74 (FWPG…AMAV), 82–102 (LGIQ…PVWL), 114–134 (IGIL…CFLV), 141–161 (FPTL…WLGQ), and 163–183 (DLGK…MYIP).

It belongs to the PlsY family. As to quaternary structure, probably interacts with PlsX.

It is found in the cell membrane. The enzyme catalyses an acyl phosphate + sn-glycerol 3-phosphate = a 1-acyl-sn-glycero-3-phosphate + phosphate. It functions in the pathway lipid metabolism; phospholipid metabolism. Catalyzes the transfer of an acyl group from acyl-phosphate (acyl-PO(4)) to glycerol-3-phosphate (G3P) to form lysophosphatidic acid (LPA). This enzyme utilizes acyl-phosphate as fatty acyl donor, but not acyl-CoA or acyl-ACP. This Dehalococcoides mccartyi (strain ATCC BAA-2266 / KCTC 15142 / 195) (Dehalococcoides ethenogenes (strain 195)) protein is Glycerol-3-phosphate acyltransferase 2.